The following is a 326-amino-acid chain: ELMO domain-containing protein 1 (326 aa).

The ELMO domain maps to 133–306 (QHEEMLLKLW…KFRKRIIKQL (174 aa)).

Its function is as follows. Acts as a GTPase-activating protein (GAP) toward guanine nucleotide exchange factors like ARL2, ARL3, ARF1 and ARF6, but not for GTPases outside the Arf family. In Bos taurus (Bovine), this protein is ELMO domain-containing protein 1 (ELMOD1).